The chain runs to 196 residues: uncharacterized protein (196 aa).

Residues 20-40 (GALALGCIALLLMGIVGCTTV) traverse the membrane as a helical segment.

The protein localises to the membrane. This is an uncharacterized protein from Mycobacterium tuberculosis (strain CDC 1551 / Oshkosh).